Consider the following 307-residue polypeptide: tRNA dimethylallyltransferase (307 aa).

9 to 16 (GPTAVGKT) contacts ATP. 11-16 (TAVGKT) contributes to the substrate binding site. Positions 34–37 (DSMQ) are interaction with substrate tRNA.

The protein belongs to the IPP transferase family. As to quaternary structure, monomer. Requires Mg(2+) as cofactor.

It catalyses the reaction adenosine(37) in tRNA + dimethylallyl diphosphate = N(6)-dimethylallyladenosine(37) in tRNA + diphosphate. Its function is as follows. Catalyzes the transfer of a dimethylallyl group onto the adenine at position 37 in tRNAs that read codons beginning with uridine, leading to the formation of N6-(dimethylallyl)adenosine (i(6)A). This chain is tRNA dimethylallyltransferase, found in Limosilactobacillus fermentum (strain NBRC 3956 / LMG 18251) (Lactobacillus fermentum).